Consider the following 99-residue polypeptide: Large ribosomal subunit protein bL21 (99 aa).

It belongs to the bacterial ribosomal protein bL21 family. As to quaternary structure, part of the 50S ribosomal subunit. Contacts protein L20.

Its function is as follows. This protein binds to 23S rRNA in the presence of protein L20. In Mesoplasma florum (strain ATCC 33453 / NBRC 100688 / NCTC 11704 / L1) (Acholeplasma florum), this protein is Large ribosomal subunit protein bL21.